The chain runs to 689 residues: Protein asunder (689 aa).

A coiled-coil region spans residues 521 to 550 (NGARLKLSKAKDQYRLLYRELEQLIQLNAT). Positions 578–619 (GASLLRSYTESPLSPERLEPITSGSASGSSNSNSLLKASKRR) are disordered. Over residues 600–614 (SGSASGSSNSNSLLK) the composition is skewed to low complexity. The Nuclear localization signal (NLS) motif lies at 613–619 (LKASKRR).

The protein belongs to the Integrator subunit 13 family. Belongs to the multiprotein complex Integrator, at least composed of IntS1, IntS2, IntS3, IntS4, omd/IntS5, IntS6, defl/IntS7, IntS8, IntS9, IntS10, IntS11, IntS12, asun/IntS13, IntS14 and IntS15. The core complex associates with protein phosphatase 2A subunits mts/PP2A and Pp2A-29B, to form the Integrator-PP2A (INTAC) complex. Post-translationally, phosphorylated.

The protein resides in the nucleus. It is found in the cytoplasm. It localises to the perinuclear region. Component of the integrator complex, a multiprotein complex that terminates RNA polymerase II (Pol II) transcription in the promoter-proximal region of genes. The integrator complex provides a quality checkpoint during transcription elongation by driving premature transcription termination of transcripts that are unfavorably configured for transcriptional elongation: the complex terminates transcription by (1) catalyzing dephosphorylation of the C-terminal domain (CTD) of Pol II subunit Polr2A/Rbp1 and Spt5, and (2) degrading the exiting nascent RNA transcript via endonuclease activity. The integrator complex is also involved in the 3'-end processing of the U7 snRNA, and also the spliceosomal snRNAs U1, U2, U4 and U5. This is Protein asunder (asun) from Drosophila erecta (Fruit fly).